The sequence spans 221 residues: uncharacterized protein (221 aa).

The first 26 residues, 1–26 (MVRLVPRAFAATVALLAAGFSPATAS), serve as a signal peptide directing secretion.

This is an uncharacterized protein from Mycobacterium tuberculosis (strain ATCC 25618 / H37Rv).